The primary structure comprises 239 residues: Uridylate kinase (239 aa).

Lys-12–Gly-15 contacts ATP. Positions Gly-20–Gly-25 are involved in allosteric activation by GTP. Residue Gly-54 coordinates UMP. Gly-55 and Arg-59 together coordinate ATP. Residues Asp-74 and Thr-135–Thr-142 each bind UMP. ATP contacts are provided by Thr-162, Tyr-168, and Asp-171.

The protein belongs to the UMP kinase family. As to quaternary structure, homohexamer.

The protein localises to the cytoplasm. The catalysed reaction is UMP + ATP = UDP + ADP. It participates in pyrimidine metabolism; CTP biosynthesis via de novo pathway; UDP from UMP (UMPK route): step 1/1. With respect to regulation, allosterically activated by GTP. Inhibited by UTP. Catalyzes the reversible phosphorylation of UMP to UDP. The protein is Uridylate kinase of Methylococcus capsulatus (strain ATCC 33009 / NCIMB 11132 / Bath).